The following is a 311-amino-acid chain: Methionyl-tRNA formyltransferase (311 aa).

110–113 contacts (6S)-5,6,7,8-tetrahydrofolate; it reads SLLP.

The protein belongs to the Fmt family.

It catalyses the reaction L-methionyl-tRNA(fMet) + (6R)-10-formyltetrahydrofolate = N-formyl-L-methionyl-tRNA(fMet) + (6S)-5,6,7,8-tetrahydrofolate + H(+). In terms of biological role, attaches a formyl group to the free amino group of methionyl-tRNA(fMet). The formyl group appears to play a dual role in the initiator identity of N-formylmethionyl-tRNA by promoting its recognition by IF2 and preventing the misappropriation of this tRNA by the elongation apparatus. The sequence is that of Methionyl-tRNA formyltransferase from Streptococcus pyogenes serotype M49 (strain NZ131).